Here is a 170-residue protein sequence, read N- to C-terminus: Photosystem I assembly protein Ycf3 (170 aa).

TPR repeat units follow at residues 35 to 68 (AFTY…EIDP), 72 to 105 (SYIL…NPFL), and 120 to 153 (GEQA…TPGN).

Belongs to the Ycf3 family.

It is found in the plastid. Its subcellular location is the chloroplast thylakoid membrane. Essential for the assembly of the photosystem I (PSI) complex. May act as a chaperone-like factor to guide the assembly of the PSI subunits. The sequence is that of Photosystem I assembly protein Ycf3 from Saccharum officinarum (Sugarcane).